A 143-amino-acid chain; its full sequence is Large ribosomal subunit protein uL11 (143 aa).

It belongs to the universal ribosomal protein uL11 family. Part of the ribosomal stalk of the 50S ribosomal subunit. Interacts with L10 and the large rRNA to form the base of the stalk. L10 forms an elongated spine to which L12 dimers bind in a sequential fashion forming a multimeric L10(L12)X complex. In terms of processing, one or more lysine residues are methylated.

In terms of biological role, forms part of the ribosomal stalk which helps the ribosome interact with GTP-bound translation factors. The polypeptide is Large ribosomal subunit protein uL11 (Clavibacter sepedonicus (Clavibacter michiganensis subsp. sepedonicus)).